A 205-amino-acid polypeptide reads, in one-letter code: Fe/S biogenesis protein NfuA (205 aa).

[4Fe-4S] cluster-binding residues include Cys162 and Cys165.

The protein belongs to the NfuA family. In terms of assembly, homodimer. It depends on [4Fe-4S] cluster as a cofactor.

In terms of biological role, involved in iron-sulfur cluster biogenesis. Binds a 4Fe-4S cluster, can transfer this cluster to apoproteins, and thereby intervenes in the maturation of Fe/S proteins. Could also act as a scaffold/chaperone for damaged Fe/S proteins. This is Fe/S biogenesis protein NfuA from Blochmanniella floridana.